Reading from the N-terminus, the 399-residue chain is Elongation factor Tu (399 aa).

The tr-type G domain occupies Lys-10 to Thr-209. Residues Gly-19–Thr-26 form a G1 region. Residue Gly-19–Thr-26 coordinates GTP. Position 26 (Thr-26) interacts with Mg(2+). Positions Gly-60–Ala-64 are G2. Residues Asp-81 to Gly-84 form a G3 region. Residues Asp-81–His-85 and Asn-136–Asp-139 contribute to the GTP site. Residues Asn-136–Asp-139 form a G4 region. Residues Ser-174 to Leu-176 form a G5 region.

The protein belongs to the TRAFAC class translation factor GTPase superfamily. Classic translation factor GTPase family. EF-Tu/EF-1A subfamily. In terms of assembly, monomer.

It is found in the cytoplasm. The catalysed reaction is GTP + H2O = GDP + phosphate + H(+). In terms of biological role, GTP hydrolase that promotes the GTP-dependent binding of aminoacyl-tRNA to the A-site of ribosomes during protein biosynthesis. The sequence is that of Elongation factor Tu from Campylobacter jejuni (strain RM1221).